Consider the following 189-residue polypeptide: Elongation factor P (189 aa).

At lysine 34 the chain carries N6-(3,6-diaminohexanoyl)-5-hydroxylysine.

This sequence belongs to the elongation factor P family. In terms of processing, may be beta-lysylated on the epsilon-amino group of Lys-34 by the combined action of EpmA and EpmB, and then hydroxylated on the C5 position of the same residue by EpmC (if this protein is present). Lysylation is critical for the stimulatory effect of EF-P on peptide-bond formation. The lysylation moiety may extend toward the peptidyltransferase center and stabilize the terminal 3-CCA end of the tRNA. Hydroxylation of the C5 position on Lys-34 may allow additional potential stabilizing hydrogen-bond interactions with the P-tRNA.

Its subcellular location is the cytoplasm. It functions in the pathway protein biosynthesis; polypeptide chain elongation. Its function is as follows. Involved in peptide bond synthesis. Alleviates ribosome stalling that occurs when 3 or more consecutive Pro residues or the sequence PPG is present in a protein, possibly by augmenting the peptidyl transferase activity of the ribosome. Modification of Lys-34 is required for alleviation. In Alcanivorax borkumensis (strain ATCC 700651 / DSM 11573 / NCIMB 13689 / SK2), this protein is Elongation factor P.